A 536-amino-acid chain; its full sequence is Ecdysone receptor (536 aa).

Residues 1–114 are modulating; the sequence is MKTENLIVTT…GPVPRQQEEL (114 aa). Residues 77-107 are disordered; the sequence is SPNSKLDDGNMSVHMGDGLDGKKSSSKKGPV. 2 NR C4-type zinc fingers span residues 115–135 and 151–175; these read CLVC…CEGC and CKFG…LKKC. Positions 115–187 form a DNA-binding region, nuclear receptor; sequence CLVCGDRASG…VGMRPECVVP (73 aa). The region spanning 278–514 is the NR LBD domain; the sequence is NQVAVIYKLI…FLEEVWDVGD (237 aa).

This sequence belongs to the nuclear hormone receptor family. NR1 subfamily.

It localises to the nucleus. In terms of biological role, receptor for ecdysone. Binds to ecdysone response elements (ECRES). The polypeptide is Ecdysone receptor (EcR) (Chironomus tentans (Midge)).